We begin with the raw amino-acid sequence, 294 residues long: uncharacterized protein (294 aa).

The tract at residues 259 to 294 (LNAPTPIPPPITSHAGQEEALKPQRASKGKKAKARK) is disordered. Basic residues predominate over residues 283–294 (RASKGKKAKARK).

This is an uncharacterized protein from Homo sapiens (Human).